Reading from the N-terminus, the 142-residue chain is Large ribosomal subunit protein uL13 (142 aa).

It belongs to the universal ribosomal protein uL13 family. As to quaternary structure, part of the 50S ribosomal subunit.

In terms of biological role, this protein is one of the early assembly proteins of the 50S ribosomal subunit, although it is not seen to bind rRNA by itself. It is important during the early stages of 50S assembly. In Edwardsiella ictaluri (strain 93-146), this protein is Large ribosomal subunit protein uL13.